The following is a 111-amino-acid chain: Photosystem II reaction center Psb28 protein (111 aa).

This sequence belongs to the Psb28 family. Part of the photosystem II complex.

It is found in the cellular thylakoid membrane. The sequence is that of Photosystem II reaction center Psb28 protein from Crocosphaera subtropica (strain ATCC 51142 / BH68) (Cyanothece sp. (strain ATCC 51142)).